A 136-amino-acid polypeptide reads, in one-letter code: uncharacterized protein (136 aa).

This is an uncharacterized protein from Pasteurella multocida (strain Pm70).